Here is a 442-residue protein sequence, read N- to C-terminus: Proline--tRNA ligase (442 aa).

This sequence belongs to the class-II aminoacyl-tRNA synthetase family. ProS type 2 subfamily. Homodimer.

The protein resides in the cytoplasm. It carries out the reaction tRNA(Pro) + L-proline + ATP = L-prolyl-tRNA(Pro) + AMP + diphosphate. Functionally, catalyzes the attachment of proline to tRNA(Pro) in a two-step reaction: proline is first activated by ATP to form Pro-AMP and then transferred to the acceptor end of tRNA(Pro). In Brucella canis (strain ATCC 23365 / NCTC 10854 / RM-666), this protein is Proline--tRNA ligase.